The primary structure comprises 334 residues: Isopentenyl-diphosphate delta-isomerase (334 aa).

A substrate-binding site is contributed by 5–6 (RK). FMN contacts are provided by residues 60-62 (AMT), serine 90, and asparagine 117. Residue glutamine 147 coordinates substrate. Glutamate 148 lines the Mg(2+) pocket. Residues lysine 179, serine 204, threonine 209, 253 to 255 (GVR), and 274 to 275 (SR) each bind FMN.

This sequence belongs to the IPP isomerase type 2 family. Homooctamer. Dimer of tetramers. It depends on FMN as a cofactor. NADPH is required as a cofactor. Requires Mg(2+) as cofactor.

It is found in the cytoplasm. The catalysed reaction is isopentenyl diphosphate = dimethylallyl diphosphate. Its function is as follows. Involved in the biosynthesis of isoprenoids. Catalyzes the 1,3-allylic rearrangement of the homoallylic substrate isopentenyl (IPP) to its allylic isomer, dimethylallyl diphosphate (DMAPP). The chain is Isopentenyl-diphosphate delta-isomerase from Streptococcus gordonii (strain Challis / ATCC 35105 / BCRC 15272 / CH1 / DL1 / V288).